Consider the following 695-residue polypeptide: Follicle-stimulating hormone receptor (695 aa).

An N-terminal signal peptide occupies residues 1 to 17 (MTFLLVSLLAFLSLGSG). Cystine bridges form between C18/C25 and C23/C32. Positions 18–46 (CHHRICHCWHRVFLCQESKVTEIPSDLPR) constitute an LRRNT domain. The Extracellular segment spans residues 18–366 (CHHRICHCWH…EDIMGYDILR (349 aa)). LRR repeat units lie at residues 49 to 72 (VELR…FGDL), 73 to 97 (EKIE…LSKL), 98 to 118 (HEIR…AFQN), 119 to 143 (LPNL…KIQS), 144 to 169 (LQKV…MGLS), 170 to 192 (FESM…AFNG), 193 to 216 (TQLD…VFQG), 217 to 240 (ASGP…GLEN), and 241 to 259 (IKKL…PSLD). The N-linked (GlcNAc...) asparagine glycan is linked to N93. N-linked (GlcNAc...) asparagine glycans are attached at residues N191 and N199. 4 disulfides stabilise this stretch: C275–C346, C276–C292, C276–C356, and C292–C338. N293 is a glycosylation site (N-linked (GlcNAc...) asparagine). Sulfotyrosine is present on Y335. The chain crosses the membrane as a helical span at residues 367-387 (VLIWFISILAITGNIIVLMIL). The Cytoplasmic portion of the chain corresponds to 388 to 398 (ITSQYKLTVPR). Residues 399 to 419 (FLMCNLAFADLCIGIYLLLIA) traverse the membrane as a helical segment. The Extracellular portion of the chain corresponds to 420–444 (SVDIYTKSQYHNYAIDWQTGAGCDA). Residues 445 to 465 (AGFFTVFASELSVYTLTVITL) form a helical membrane-spanning segment. Topologically, residues 466–487 (ERWHTITHAMQLECKVQLRHAA) are cytoplasmic. Residues 488–508 (IIMLLGWIFAFMVALFPIFGI) form a helical membrane-spanning segment. Over 509–528 (SSYMKVSICLPMDIDSPLSQ) the chain is Extracellular. Residues 529–550 (LYVMSLLVLNVLAFVVICCCYA) traverse the membrane as a helical segment. Over 551 to 573 (HIYLTVRNPNIVSSSSDTKIAKR) the chain is Cytoplasmic. A helical membrane pass occupies residues 574 to 594 (MAMLIFTDFLCMAPISFFAIS). The Extracellular portion of the chain corresponds to 595–608 (ASLKVPLITVSKSK). Residues 609-629 (ILLVLFYPINSCANPFLYAIF) form a helical membrane-spanning segment. The Cytoplasmic segment spans residues 630–695 (TKNFRRDFFI…LIPLRHLAKN (66 aa)).

This sequence belongs to the G-protein coupled receptor 1 family. FSH/LSH/TSH subfamily. As to quaternary structure, homotrimer. Functions as a homotrimer binding the FSH hormone heterodimer composed of CGA and FSHB. Interacts with ARRB2. Interacts with APPL2; interaction is independent of follicle stimulating hormone stimulation. N-glycosylated; indirectly required for FSH-binding, possibly via a conformational change that allows high affinity binding of hormone. Post-translationally, sulfated.

Its subcellular location is the cell membrane. Functionally, g protein-coupled receptor for follitropin, the follicle-stimulating hormone. Through cAMP production activates the downstream PI3K-AKT and ERK1/ERK2 signaling pathways. The protein is Follicle-stimulating hormone receptor (FSHR) of Felis catus (Cat).